The following is a 280-amino-acid chain: Probable S-methyl-5'-thioinosine phosphorylase (280 aa).

Phosphate-binding positions include T8 and 50–51; that span reads RH. M175 lines the substrate pocket. T176 serves as a coordination point for phosphate. 199–201 contributes to the substrate binding site; sequence NYA.

The protein belongs to the PNP/MTAP phosphorylase family. MTAP subfamily. In terms of assembly, homotrimer.

It catalyses the reaction S-methyl-5'-thioinosine + phosphate = 5-(methylsulfanyl)-alpha-D-ribose 1-phosphate + hypoxanthine. It functions in the pathway purine metabolism; purine nucleoside salvage. In terms of biological role, catalyzes the reversible phosphorylation of S-methyl-5'-thioinosine (MTI) to hypoxanthine and 5-methylthioribose-1-phosphate. Involved in the breakdown of S-methyl-5'-thioadenosine (MTA), a major by-product of polyamine biosynthesis. Catabolism of (MTA) occurs via deamination to MTI and phosphorolysis to hypoxanthine. The chain is Probable S-methyl-5'-thioinosine phosphorylase from Methanothermobacter thermautotrophicus (strain ATCC 29096 / DSM 1053 / JCM 10044 / NBRC 100330 / Delta H) (Methanobacterium thermoautotrophicum).